The sequence spans 67 residues: uncharacterized protein (67 aa).

It to E.coli YbdD.

This is an uncharacterized protein from Escherichia coli O157:H7.